The sequence spans 208 residues: Peptidyl-tRNA hydrolase (208 aa).

Residue Tyr-19 coordinates tRNA. His-24 serves as the catalytic Proton acceptor. Residues Phe-71, Asn-73, and Asn-119 each contribute to the tRNA site.

Belongs to the PTH family. As to quaternary structure, monomer.

Its subcellular location is the cytoplasm. The enzyme catalyses an N-acyl-L-alpha-aminoacyl-tRNA + H2O = an N-acyl-L-amino acid + a tRNA + H(+). Hydrolyzes ribosome-free peptidyl-tRNAs (with 1 or more amino acids incorporated), which drop off the ribosome during protein synthesis, or as a result of ribosome stalling. Functionally, catalyzes the release of premature peptidyl moieties from peptidyl-tRNA molecules trapped in stalled 50S ribosomal subunits, and thus maintains levels of free tRNAs and 50S ribosomes. In Synechococcus elongatus (strain ATCC 33912 / PCC 7942 / FACHB-805) (Anacystis nidulans R2), this protein is Peptidyl-tRNA hydrolase.